We begin with the raw amino-acid sequence, 197 residues long: Recombination protein RecR (197 aa).

The segment at 56 to 71 (CNVCFHFSADPICEIC) adopts a C4-type zinc-finger fold. Positions 79 to 173 (QTICVVADSR…KVTRIAFGLP (95 aa)) constitute a Toprim domain.

The protein belongs to the RecR family.

Its function is as follows. May play a role in DNA repair. It seems to be involved in an RecBC-independent recombinational process of DNA repair. It may act with RecF and RecO. The sequence is that of Recombination protein RecR from Rippkaea orientalis (strain PCC 8801 / RF-1) (Cyanothece sp. (strain PCC 8801)).